A 491-amino-acid polypeptide reads, in one-letter code: Nickel-binding protein NikA (491 aa).

A signal peptide spans 1 to 18 (MKFKRLATIFSAVLVLSG). C19 carries the N-palmitoyl cysteine lipid modification. C19 carries the S-diacylglycerol cysteine lipid modification.

This sequence belongs to the bacterial solute-binding protein 5 family. As to quaternary structure, the complex is composed of two ATP-binding proteins (NikD and NikE), two transmembrane proteins (NikB and NikC) and a solute-binding protein (NikA).

It localises to the cell membrane. Part of the ABC transporter complex NikABCDE (Opp2) involved in nickel import. Binds nickel and transfers it to the membrane-bound permease. Required for full urease activity and plays a significant role in the virulence of S.aureus during urinary tract infection (UTI). May bind nickel via a nickel-chelator. This Staphylococcus aureus (strain NCTC 8325 / PS 47) protein is Nickel-binding protein NikA.